A 191-amino-acid chain; its full sequence is Transcriptional activator GvpE1 (191 aa).

The segment at 31 to 51 (SDGASDHADQPPDEGATQRYT) is disordered. 140 to 145 (KRKVYR) serves as a coordination point for DNA. The tract at residues 150-181 (EGAFTRIDHMVDQLLLFSLVLKAVMTDCKARQ) is leucine-zipper.

In terms of assembly, interacts with GvpD.

The protein localises to the cytoplasm. With respect to regulation, the amount of protein that accumulates is controlled by GvpD; GvpD causes a reduction in the amount of GvpE, preventing accumulation of excessive amounts of gas vesicles. In terms of biological role, plays a regulatory role in gas vesicle synthesis, activates transcription of the gvpA operon, and probably of the gvpD operon. Gas vesicles are hollow, gas filled proteinaceous nanostructures found in several microbial planktonic microorganisms. They allow positioning of halobacteria at the optimal depth for growth in the poorly aerated, shallow brine pools of their habitat. Its function is as follows. Expression of a 9.5 kb p-vac DNA fragment containing 2 divergently transcribed regions (gvpD-gvpE-gvpF-gvpG-gvpH-gvpI-gvpJ-gvpK-gvpL-gvpM and gvpA-gvpC-gvpN-gvpO) allows H.volcanii to produce gas vesicles. A similar region restores gas vesicle production in H.halobium without the p-vac locus, but it still has the c-vac locus. This is Transcriptional activator GvpE1 (gvpE11) from Halobacterium salinarum (strain ATCC 700922 / JCM 11081 / NRC-1) (Halobacterium halobium).